The chain runs to 194 residues: Glycerol-3-phosphate acyltransferase (194 aa).

The next 5 membrane-spanning stretches (helical) occupy residues 4-24 (EIVLIIGAYLLGSIPTGLLLA), 78-98 (EIWVAATGLAAFLGHVYTVFL), 110-130 (LGVFIGISPLSVLAALAIFVF), 137-157 (YVSLASITAAAAIPFLVALIE), and 161-181 (LLITMSVIIAALVVFKHRENI).

It belongs to the PlsY family. Probably interacts with PlsX.

The protein localises to the cell inner membrane. The catalysed reaction is an acyl phosphate + sn-glycerol 3-phosphate = a 1-acyl-sn-glycero-3-phosphate + phosphate. It participates in lipid metabolism; phospholipid metabolism. In terms of biological role, catalyzes the transfer of an acyl group from acyl-phosphate (acyl-PO(4)) to glycerol-3-phosphate (G3P) to form lysophosphatidic acid (LPA). This enzyme utilizes acyl-phosphate as fatty acyl donor, but not acyl-CoA or acyl-ACP. In Geotalea daltonii (strain DSM 22248 / JCM 15807 / FRC-32) (Geobacter daltonii), this protein is Glycerol-3-phosphate acyltransferase.